A 296-amino-acid chain; its full sequence is Cutinase est1 (296 aa).

Positions 1–35 (MSVTTPRREASLLSRAVAVAAAAAATVALAAPAQA) are cleaved as a signal peptide. Residues 36-57 (ANPYERGPNPTESMLEARSGPF) form a disordered region. Residue Tyr-95 participates in poly(ethylene terephthalate) binding. Ser-165 acts as the Nucleophile in catalysis. Residues Met-166 and Trp-190 each coordinate poly(ethylene terephthalate). Active-site charge relay system residues include Asp-211 and His-243. A disulfide bridge connects residues Cys-276 and Cys-294.

It belongs to the AB hydrolase superfamily. In terms of assembly, monomer.

It is found in the secreted. Its subcellular location is the periplasm. The enzyme catalyses (ethylene terephthalate)(n) + H2O = (ethylene terephthalate)(n-1) + 4-[(2-hydroxyethoxy)carbonyl]benzoate + H(+). It carries out the reaction a butanoate ester + H2O = an aliphatic alcohol + butanoate + H(+). The catalysed reaction is cutin + H2O = cutin monomers.. Its function is as follows. Catalyzes the hydrolysis of cutin, a polyester that forms the structure of plant cuticle. Shows esterase activity towards p-nitrophenol-linked aliphatic esters (pNP-aliphatic esters). Capable of degrading the plastic poly(ethylene terephthalate) (PET), the most abundant polyester plastic in the world. Can also depolymerize the synthetic polyester poly(epsilon-caprolactone) (PCL). In Thermobifida alba (Thermomonospora alba), this protein is Cutinase est1.